Reading from the N-terminus, the 322-residue chain is Tetraacyldisaccharide 4'-kinase (322 aa).

40 to 47 (CVGGTGKT) serves as a coordination point for ATP.

It belongs to the LpxK family.

The catalysed reaction is a lipid A disaccharide + ATP = a lipid IVA + ADP + H(+). Its pathway is glycolipid biosynthesis; lipid IV(A) biosynthesis; lipid IV(A) from (3R)-3-hydroxytetradecanoyl-[acyl-carrier-protein] and UDP-N-acetyl-alpha-D-glucosamine: step 6/6. Functionally, transfers the gamma-phosphate of ATP to the 4'-position of a tetraacyldisaccharide 1-phosphate intermediate (termed DS-1-P) to form tetraacyldisaccharide 1,4'-bis-phosphate (lipid IVA). This Koribacter versatilis (strain Ellin345) protein is Tetraacyldisaccharide 4'-kinase.